The sequence spans 951 residues: Valine--tRNA ligase (951 aa).

The short motif at 40–50 (PNVTGSLHMGH) is the 'HIGH' region element. A 'KMSKS' region motif is present at residues 551 to 555 (KMSKS). K554 serves as a coordination point for ATP. A coiled-coil region spans residues 879 to 950 (MAGLIDVEAE…LLEQKAKIES (72 aa)).

The protein belongs to the class-I aminoacyl-tRNA synthetase family. ValS type 1 subfamily. As to quaternary structure, monomer.

Its subcellular location is the cytoplasm. The enzyme catalyses tRNA(Val) + L-valine + ATP = L-valyl-tRNA(Val) + AMP + diphosphate. Functionally, catalyzes the attachment of valine to tRNA(Val). As ValRS can inadvertently accommodate and process structurally similar amino acids such as threonine, to avoid such errors, it has a 'posttransfer' editing activity that hydrolyzes mischarged Thr-tRNA(Val) in a tRNA-dependent manner. This Pseudoalteromonas translucida (strain TAC 125) protein is Valine--tRNA ligase.